The sequence spans 379 residues: MKHLAILGSTGSIGQQTLKIIRSLPHLFKVVALASYGNNKDVFFEQIREFSPSIVSVYDEQSYFEISKEFPNIEVFLGEEGLLAAATAGEVDTIVAASSGVVALPAIIEAMKLGKTLALANKEVLVSAGEIIKEIAKQYQTRILPIDSEHNALYQCLEGKNTSEVKKLVLTASGGPLLYKSKEDLSRVTIRDVLKHPIWNMGAKITVDSSTLVNKGLEIIEAYWLFGLENAEIDAVVHPQSLIHGMVEFQDGTVLSVMNPPSMLFPIQHALTAPKRYPAPHKGIDFSVKQTLEFFPVDEERFPSIGLARQVLREKGSSGPFLNAANEVLVQRFLTEEIAWCDILDKLTRLMENYRVSSCSSLDDVFAVDKEARALAQEI.

Positions 10, 11, 12, 13, 39, and 121 each coordinate NADPH. Lysine 122 lines the 1-deoxy-D-xylulose 5-phosphate pocket. Residue glutamate 123 coordinates NADPH. Aspartate 147 contacts Mn(2+). 4 residues coordinate 1-deoxy-D-xylulose 5-phosphate: serine 148, glutamate 149, serine 173, and histidine 196. Glutamate 149 provides a ligand contact to Mn(2+). Position 202 (glycine 202) interacts with NADPH. Residues serine 209, asparagine 214, lysine 215, and glutamate 218 each coordinate 1-deoxy-D-xylulose 5-phosphate. Mn(2+) is bound at residue glutamate 218.

Belongs to the DXR family. Mg(2+) is required as a cofactor. Mn(2+) serves as cofactor.

The catalysed reaction is 2-C-methyl-D-erythritol 4-phosphate + NADP(+) = 1-deoxy-D-xylulose 5-phosphate + NADPH + H(+). Its pathway is isoprenoid biosynthesis; isopentenyl diphosphate biosynthesis via DXP pathway; isopentenyl diphosphate from 1-deoxy-D-xylulose 5-phosphate: step 1/6. Functionally, catalyzes the NADPH-dependent rearrangement and reduction of 1-deoxy-D-xylulose-5-phosphate (DXP) to 2-C-methyl-D-erythritol 4-phosphate (MEP). The sequence is that of 1-deoxy-D-xylulose 5-phosphate reductoisomerase from Chlamydia caviae (strain ATCC VR-813 / DSM 19441 / 03DC25 / GPIC) (Chlamydophila caviae).